Consider the following 194-residue polypeptide: Insertion element IS136 uncharacterized 21.2 kDa protein (194 aa).

A disordered region spans residues 73–103 (SCDRACAPTPGRDPPVSSLPNSRQPARQNPR). A compositionally biased stretch (polar residues) spans 90–103 (SLPNSRQPARQNPR).

The chain is Insertion element IS136 uncharacterized 21.2 kDa protein from Agrobacterium tumefaciens (strain T37).